A 536-amino-acid polypeptide reads, in one-letter code: Caspase A (536 aa).

A propeptide spans Met1–Asp273 (removed in mature form by autoprocessing). Residues His364 and Cys406 contribute to the active site.

The protein belongs to the peptidase C14A family. As to quaternary structure, heterodimer formed by the tight association of the large subunit p16 and the small subunit p14. In terms of processing, autocatalytic cleavage removes the propeptide and generates the two active subunits p16 and p14 in vitro. Cannot be cleaved by ced-3 in vitro. Isoform a: Expression is restricted to the late germline pachytene stage of meiosis I in both L4 larvae and adult hermaphrodite gonads. Isoform b: Expression is restricted to the late germline pachytene stage of meiosis I in both L4 larvae and adult hermaphrodite gonads.

The catalysed reaction is Strict requirement for an Asp residue at position P1 and has a preferred cleavage sequence of Tyr-Val-Ala-Asp-|-.. With respect to regulation, inhibited by cysteine protease inhibitor iodoacetic acid (CH3COOI) but not by N-[N-(L-3-transcarboxirane-2-carbonyl)-leucyl]-agmatine (E-64) or benzyloxycarbonyl-DEVD-fluoro-methyl ketone (Z-DEVD-FMK). Its function is as follows. Cysteine protease which, in vitro, cleaves itself and caspase ced-3 into their mature active forms. Also cleaves, in vitro, inactive caspase csp-2 isoform b. Required maternally to induce apoptosis in a subset of cells fated to die during embryogenesis, mostly independently of the ced-9, ced-4 and ced-3 canonical apoptosis pathway. Involved in the degeneration of dopaminergic CEP neurons in response to high Mn(2+) levels. In terms of biological role, dispensable for regulating apoptosis during embryogenesis. The chain is Caspase A from Caenorhabditis elegans.